The following is a 550-amino-acid chain: Probable terpene synthase 2 (550 aa).

Residues Asp-305, Asp-309, and Glu-457 each contribute to the Mg(2+) site. The DDXXD motif motif lies at 305 to 309 (DDIYD).

Belongs to the terpene synthase family. The cofactor is Mg(2+).

Functionally, probable sesquiterpene synthase. The sequence is that of Probable terpene synthase 2 (TPS2) from Ricinus communis (Castor bean).